A 549-amino-acid chain; its full sequence is Glucose-6-phosphate isomerase (549 aa).

The Proton donor role is filled by glutamate 355. Residues histidine 386 and lysine 514 contribute to the active site.

Belongs to the GPI family.

The protein resides in the cytoplasm. It catalyses the reaction alpha-D-glucose 6-phosphate = beta-D-fructose 6-phosphate. Its pathway is carbohydrate biosynthesis; gluconeogenesis. It participates in carbohydrate degradation; glycolysis; D-glyceraldehyde 3-phosphate and glycerone phosphate from D-glucose: step 2/4. Functionally, catalyzes the reversible isomerization of glucose-6-phosphate to fructose-6-phosphate. This is Glucose-6-phosphate isomerase from Buchnera aphidicola subsp. Acyrthosiphon pisum (strain 5A).